The chain runs to 305 residues: Sulfate adenylyltransferase subunit 2 (305 aa).

This sequence belongs to the PAPS reductase family. CysD subfamily. Heterodimer composed of CysD, the smaller subunit, and CysN.

It carries out the reaction sulfate + ATP + H(+) = adenosine 5'-phosphosulfate + diphosphate. It participates in sulfur metabolism; hydrogen sulfide biosynthesis; sulfite from sulfate: step 1/3. In terms of biological role, with CysN forms the ATP sulfurylase (ATPS) that catalyzes the adenylation of sulfate producing adenosine 5'-phosphosulfate (APS) and diphosphate, the first enzymatic step in sulfur assimilation pathway. APS synthesis involves the formation of a high-energy phosphoric-sulfuric acid anhydride bond driven by GTP hydrolysis by CysN coupled to ATP hydrolysis by CysD. This is Sulfate adenylyltransferase subunit 2 from Pseudomonas fluorescens (strain SBW25).